We begin with the raw amino-acid sequence, 662 residues long: UvrABC system protein B (662 aa).

Residues 31–188 (DNIEGGEKAQ…NDLVDIQFER (158 aa)) enclose the Helicase ATP-binding domain. Residue 44 to 51 (GATGTGKT) coordinates ATP. Residues 97–120 (YYDYYQPEAYVPSSDTYIEKDSSV) carry the Beta-hairpin motif. Positions 435–601 (QIDDLLGEIN…TIKKEIRDLI (167 aa)) constitute a Helicase C-terminal domain. A UVR domain is found at 626–661 (KELVKKLEKQMQEAVEVLDFELAAQIRDMMLEVKAL).

Belongs to the UvrB family. As to quaternary structure, forms a heterotetramer with UvrA during the search for lesions. Interacts with UvrC in an incision complex.

The protein localises to the cytoplasm. Functionally, the UvrABC repair system catalyzes the recognition and processing of DNA lesions. A damage recognition complex composed of 2 UvrA and 2 UvrB subunits scans DNA for abnormalities. Upon binding of the UvrA(2)B(2) complex to a putative damaged site, the DNA wraps around one UvrB monomer. DNA wrap is dependent on ATP binding by UvrB and probably causes local melting of the DNA helix, facilitating insertion of UvrB beta-hairpin between the DNA strands. Then UvrB probes one DNA strand for the presence of a lesion. If a lesion is found the UvrA subunits dissociate and the UvrB-DNA preincision complex is formed. This complex is subsequently bound by UvrC and the second UvrB is released. If no lesion is found, the DNA wraps around the other UvrB subunit that will check the other stand for damage. This is UvrABC system protein B from Streptococcus pneumoniae (strain P1031).